Consider the following 353-residue polypeptide: Heterogeneous nuclear ribonucleoproteins A2/B1 (353 aa).

Residue Met-1 is modified to N-acetylmethionine. Thr-4 carries the post-translational modification Phosphothreonine. The Nuclear localization signal signature appears at 9-15; sequence PLERKKR. RRM domains lie at 21–104 and 112–191; these read RKLF…ESGK and KKLF…LSRQ. Lys-22 participates in a covalent cross-link: Glycyl lysine isopeptide (Lys-Gly) (interchain with G-Cter in SUMO2). At Ser-29 the chain carries Phosphoserine. Arg-38 carries the omega-N-methylarginine modification. Phosphoserine is present on Ser-85. An N6,N6-dimethyllysine; alternate modification is found at Lys-104. A Glycyl lysine isopeptide (Lys-Gly) (interchain with G-Cter in SUMO2); alternate cross-link involves residue Lys-104. Glycyl lysine isopeptide (Lys-Gly) (interchain with G-Cter in SUMO2) cross-links involve residues Lys-112, Lys-120, and Lys-137. Thr-140 bears the Phosphothreonine mark. Position 149 is a phosphoserine (Ser-149). Lys-152 participates in a covalent cross-link: Glycyl lysine isopeptide (Lys-Gly) (interchain with G-Cter in SUMO2). Thr-159 carries the post-translational modification Phosphothreonine. Residues Lys-168 and Lys-173 each participate in a glycyl lysine isopeptide (Lys-Gly) (interchain with G-Cter in SUMO2); alternate cross-link. N6-acetyllysine; alternate is present on residues Lys-168 and Lys-173. Thr-176 carries the phosphothreonine modification. Lys-186 participates in a covalent cross-link: Glycyl lysine isopeptide (Lys-Gly) (interchain with G-Cter in SUMO2). 2 positions are modified to phosphoserine: Ser-189 and Ser-201. Residues 193–353 are disordered; sequence MQEVQSSRSG…SGGYGGRSRY (161 aa). Positions 202–223 are enriched in gly residues; the sequence is GRGGNFGFGDSRGGGGNFGPGP. Residue Arg-203 is modified to Asymmetric dimethylarginine; alternate. Residue Arg-203 is modified to Dimethylated arginine; alternate. Arg-203 bears the Omega-N-methylarginine; alternate mark. At Ser-212 the chain carries Phosphoserine. The residue at position 213 (Arg-213) is an Asymmetric dimethylarginine; alternate. Dimethylated arginine; alternate is present on Arg-213. An Omega-N-methylarginine; alternate modification is found at Arg-213. Position 225 is a phosphoserine (Ser-225). Arg-228 carries the post-translational modification Omega-N-methylarginine. Phosphoserine occurs at positions 231 and 236. Arg-238 carries the post-translational modification Omega-N-methylarginine. Ser-259 bears the Phosphoserine mark. Arg-266 carries the post-translational modification Asymmetric dimethylarginine; alternate. Position 266 is an omega-N-methylarginine; alternate (Arg-266). A nuclear targeting sequence region spans residues 308–347; that stretch reads QQPSNYGPMKSGNFGGSRNMGGPYGGGNYGPGGSGGSGGY. The segment covering 320–353 has biased composition (gly residues); sequence NFGGSRNMGGPYGGGNYGPGGSGGSGGYGGRSRY. Position 324 is a phosphoserine (Ser-324). An Omega-N-methylarginine modification is found at Arg-325. Residue Tyr-331 is modified to Phosphotyrosine. Phosphoserine is present on residues Ser-341 and Ser-344. At Tyr-347 the chain carries Phosphotyrosine. An Omega-N-methylarginine modification is found at Arg-350.

In terms of assembly, identified in the spliceosome C complex. Identified in a IGF2BP1-dependent mRNP granule complex containing untranslated mRNAs. Interacts with IGF2BP1. Interacts with C9orf72. Interacts with DGCR8. Interacts with TARDBP. Interacts with CKAP5. Interacts with PPIA/CYPA. Interacts (via C-terminus) with FAM76B; the interaction results in retention of HNRNPA2B1 in the nucleus and inhibition of the NF-kappa-B-mediated inflammatory pathway. Interacts with NF-kappa-B inhibitors NFKBIA and NFKBIE; the interaction may be mediated by the RRM2 domain of HNRNPA2B1, and HNRNPA2B1 may interact simultaneously with FAM76B and either NFKBIA or NFKBIE to form a complex. In terms of processing, sumoylated in exosomes, promoting miRNAs-binding. Post-translationally, asymmetric dimethylation at Arg-266 constitutes the major methylation site. According to a report, methylation affects subcellular location and promotes nuclear localization. According to another report, methylation at Arg-266 does not influence nucleocytoplasmic shuttling.

The protein resides in the nucleus. It localises to the nucleoplasm. It is found in the cytoplasmic granule. The protein localises to the secreted. Its subcellular location is the extracellular exosome. In terms of biological role, heterogeneous nuclear ribonucleoprotein (hnRNP) that associates with nascent pre-mRNAs, packaging them into hnRNP particles. The hnRNP particle arrangement on nascent hnRNA is non-random and sequence-dependent and serves to condense and stabilize the transcripts and minimize tangling and knotting. Packaging plays a role in various processes such as transcription, pre-mRNA processing, RNA nuclear export, subcellular location, mRNA translation and stability of mature mRNAs. Forms hnRNP particles with at least 20 other different hnRNP and heterogeneous nuclear RNA in the nucleus. Involved in transport of specific mRNAs to the cytoplasm in oligodendrocytes and neurons: acts by specifically recognizing and binding the A2RE (21 nucleotide hnRNP A2 response element) or the A2RE11 (derivative 11 nucleotide oligonucleotide) sequence motifs present on some mRNAs, and promotes their transport to the cytoplasm. Specifically binds single-stranded telomeric DNA sequences, protecting telomeric DNA repeat against endonuclease digestion. Also binds other RNA molecules, such as primary miRNA (pri-miRNAs): acts as a nuclear 'reader' of the N6-methyladenosine (m6A) mark by specifically recognizing and binding a subset of nuclear m6A-containing pri-miRNAs. Binding to m6A-containing pri-miRNAs promotes pri-miRNA processing by enhancing binding of DGCR8 to pri-miRNA transcripts. Involved in miRNA sorting into exosomes following sumoylation, possibly by binding (m6A)-containing pre-miRNAs. Acts as a regulator of efficiency of mRNA splicing, possibly by binding to m6A-containing pre-mRNAs. Plays a role in the splicing of pyruvate kinase PKM by binding repressively to sequences flanking PKM exon 9, inhibiting exon 9 inclusion and resulting in exon 10 inclusion and production of the PKM M2 isoform. This chain is Heterogeneous nuclear ribonucleoproteins A2/B1 (HNRNPA2B1), found in Pongo abelii (Sumatran orangutan).